Reading from the N-terminus, the 421-residue chain is BEN domain-containing protein 5 (421 aa).

N6-acetyllysine is present on K133. Residues 180–243 (RALYEELLRN…LNRRLQDVLL (64 aa)) are a coiled coil. A Glycyl lysine isopeptide (Lys-Gly) (interchain with G-Cter in SUMO2) cross-link involves residue K258. Positions 302–408 (GSGIWVDEEK…EKIMDINKSC (107 aa)) constitute a BEN domain.

Functionally, acts as a transcriptional repressor. The polypeptide is BEN domain-containing protein 5 (BEND5) (Homo sapiens (Human)).